The chain runs to 144 residues: Putative pre-16S rRNA nuclease (144 aa).

It belongs to the YqgF nuclease family.

Its subcellular location is the cytoplasm. In terms of biological role, could be a nuclease involved in processing of the 5'-end of pre-16S rRNA. This chain is Putative pre-16S rRNA nuclease, found in Pseudomonas paraeruginosa (strain DSM 24068 / PA7) (Pseudomonas aeruginosa (strain PA7)).